The chain runs to 101 residues: Small ribosomal subunit protein uS14 (101 aa).

It belongs to the universal ribosomal protein uS14 family. Part of the 30S ribosomal subunit. Contacts proteins S3 and S10.

Its function is as follows. Binds 16S rRNA, required for the assembly of 30S particles and may also be responsible for determining the conformation of the 16S rRNA at the A site. This chain is Small ribosomal subunit protein uS14, found in Acinetobacter baumannii (strain AB307-0294).